Consider the following 146-residue polypeptide: Cysteine protease inhibitor 3 (146 aa).

Cystine bridges form between C8-C60 and C109-C115.

This sequence belongs to the protease inhibitor I3 (leguminous Kunitz-type inhibitor) family.

It is found in the vacuole. Inhibitor of cysteine proteases. May protect the plant by inhibiting proteases of invading organisms. The protein is Cysteine protease inhibitor 3 of Solanum tuberosum (Potato).